A 193-amino-acid chain; its full sequence is Xanthine phosphoribosyltransferase (193 aa).

Leucine 20 and asparagine 27 together coordinate xanthine. Alanine 128 to alanine 132 provides a ligand contact to 5-phospho-alpha-D-ribose 1-diphosphate. Xanthine is bound at residue lysine 156.

This sequence belongs to the purine/pyrimidine phosphoribosyltransferase family. Xpt subfamily. Homodimer.

The protein localises to the cytoplasm. The enzyme catalyses XMP + diphosphate = xanthine + 5-phospho-alpha-D-ribose 1-diphosphate. It participates in purine metabolism; XMP biosynthesis via salvage pathway; XMP from xanthine: step 1/1. Functionally, converts the preformed base xanthine, a product of nucleic acid breakdown, to xanthosine 5'-monophosphate (XMP), so it can be reused for RNA or DNA synthesis. In Staphylococcus haemolyticus (strain JCSC1435), this protein is Xanthine phosphoribosyltransferase.